The following is a 356-amino-acid chain: Protein RecA (356 aa).

77 to 84 (GPESSGKT) serves as a coordination point for ATP.

It belongs to the RecA family.

Its subcellular location is the cytoplasm. Can catalyze the hydrolysis of ATP in the presence of single-stranded DNA, the ATP-dependent uptake of single-stranded DNA by duplex DNA, and the ATP-dependent hybridization of homologous single-stranded DNAs. It interacts with LexA causing its activation and leading to its autocatalytic cleavage. In Caulobacter vibrioides (strain ATCC 19089 / CIP 103742 / CB 15) (Caulobacter crescentus), this protein is Protein RecA.